A 209-amino-acid chain; its full sequence is Glutathione S-transferase 1-1 (209 aa).

Positions 1–81 (MADFYYLPGS…YLVEKYGKTD (81 aa)) constitute a GST N-terminal domain. Residues Ser10, 51–53 (HTI), and 65–67 (ESR) contribute to the glutathione site. The GST C-terminal domain maps to 87–209 (CPKKRAVINQ…GCLEFKKFFE (123 aa)).

Belongs to the GST superfamily. Theta family. As to quaternary structure, homodimer.

It catalyses the reaction RX + glutathione = an S-substituted glutathione + a halide anion + H(+). The catalysed reaction is 1,1,1-trichloro-2,2-bis(4-chlorophenyl)ethane = 1,1-dichloro-2,2-bis(4-chlorophenyl)ethylene + chloride + H(+). Its function is as follows. Conjugation of reduced glutathione to a wide number of exogenous and endogenous hydrophobic electrophiles. Has DDT dehydrochlorinase activity. This Drosophila sechellia (Fruit fly) protein is Glutathione S-transferase 1-1 (GstD1).